Consider the following 263-residue polypeptide: N-acyl homoserine lactonase AttM (263 aa).

His103, His105, Asp107, His108, His180, Asp202, and His247 together coordinate Zn(2+).

Belongs to the metallo-beta-lactamase superfamily. Requires Zn(2+) as cofactor.

The enzyme catalyses an N-acyl-L-homoserine lactone + H2O = an N-acyl-L-homoserine + H(+). This Rhizobium radiobacter (Agrobacterium tumefaciens) protein is N-acyl homoserine lactonase AttM (attM).